We begin with the raw amino-acid sequence, 345 residues long: Probable aldo-keto reductase 4 (345 aa).

Tyr-63 (proton donor) is an active-site residue. Substrate is bound at residue His-130. 209 to 219 is an NADP(+) binding site; sequence SPLGRGFFASG.

Belongs to the aldo/keto reductase family.

The protein is Probable aldo-keto reductase 4 of Arabidopsis thaliana (Mouse-ear cress).